Here is a 312-residue protein sequence, read N- to C-terminus: Golgi to ER traffic protein 2 (312 aa).

Over 1 to 175 (MSDSPSISAE…VQYNTYRHQV (175 aa)) the chain is Cytoplasmic. A helical membrane pass occupies residues 176–196 (WKFRFLAVRYFALLANFIYHF). Residues 197 to 224 (YIIGDSISFASSSHQFIRELIPVEPARS) are Lumenal-facing. The chain crosses the membrane as a helical span at residues 225 to 244 (FFTLFSTIEVVIIASYYFLG). The Cytoplasmic portion of the chain corresponds to 245–288 (TKEGFFSTATSNNFVVKLLDMGSMVLPQLQQFKTIAVRLLGYYE). The helical transmembrane segment at 289–309 (LLAVLLGDLSLVVVLFGLHSV) threads the bilayer. The Lumenal segment spans residues 310-312 (LGN).

Belongs to the GET2 family. In terms of assembly, component of the Golgi to ER traffic (GET) complex, which is composed of GET1, GET2 and GET3. Within the complex, GET1 and GET2 form a heterotetramer which is stabilized by phosphatidylinositol binding and which binds to the GET3 homodimer.

It localises to the endoplasmic reticulum membrane. Its subcellular location is the golgi apparatus membrane. Its function is as follows. Required for the post-translational delivery of tail-anchored (TA) proteins to the endoplasmic reticulum. Together with GET1, acts as a membrane receptor for soluble GET3, which recognizes and selectively binds the transmembrane domain of TA proteins in the cytosol. The GET complex cooperates with the HDEL receptor ERD2 to mediate the ATP-dependent retrieval of resident ER proteins that contain a C-terminal H-D-E-L retention signal from the Golgi to the ER. The chain is Golgi to ER traffic protein 2 from Scheffersomyces stipitis (strain ATCC 58785 / CBS 6054 / NBRC 10063 / NRRL Y-11545) (Yeast).